A 760-amino-acid chain; its full sequence is NAD(P)H-quinone oxidoreductase subunit 5, chloroplastic (760 aa).

A run of 16 helical transmembrane segments spans residues 9 to 29 (WIISFVTLPVPMLIGMGLLLF), 39 to 59 (IWAFPSVLLLSIVMVFSTDLF), 89 to 109 (IDPLTSILLILITTVGILVLV), 125 to 145 (FVYMSFFNTSMLGLVTSSNLI), 147 to 167 (IYIFWELVGMCSYLLIGFWFT), 185 to 205 (GDFGLLLGILGLYWITGSFEF), 221 to 241 (NEVHFLFVTLCAFLLFSGAIA), 260 to 280 (TPISALIHAATMVAAGIFLVA), 282 to 302 (LLPLFVVIPYIMKLIALIGII), 329 to 349 (LGYTMLALGMGSYRAALFHLI), 356 to 376 (ALLFLGSGSIIHSMEGIVGYS), 398 to 418 (IAFLLGTLSLCGIPPLACFWS), 429 to 449 (YSPIFAIIAFSTAGLTAFYMF), 556 to 576 (ILFPMLVLVLFTLFIGAIGIP), 620 to 640 (FSVSIASFGIFIASSLYKPIY), and 734 to 754 (FYLLLYLFYVLIFLLISSSIF).

This sequence belongs to the complex I subunit 5 family. As to quaternary structure, NDH is composed of at least 16 different subunits, 5 of which are encoded in the nucleus.

It is found in the plastid. It localises to the chloroplast thylakoid membrane. The enzyme catalyses a plastoquinone + NADH + (n+1) H(+)(in) = a plastoquinol + NAD(+) + n H(+)(out). It carries out the reaction a plastoquinone + NADPH + (n+1) H(+)(in) = a plastoquinol + NADP(+) + n H(+)(out). In terms of biological role, NDH shuttles electrons from NAD(P)H:plastoquinone, via FMN and iron-sulfur (Fe-S) centers, to quinones in the photosynthetic chain and possibly in a chloroplast respiratory chain. The immediate electron acceptor for the enzyme in this species is believed to be plastoquinone. Couples the redox reaction to proton translocation, and thus conserves the redox energy in a proton gradient. The chain is NAD(P)H-quinone oxidoreductase subunit 5, chloroplastic (ndhF) from Populus alba (White poplar).